Here is a 210-residue protein sequence, read N- to C-terminus: Large ribosomal subunit protein uL3 (210 aa).

The segment at glycine 131 to methionine 165 is disordered.

The protein belongs to the universal ribosomal protein uL3 family. Part of the 50S ribosomal subunit. Forms a cluster with proteins L14 and L19.

Its function is as follows. One of the primary rRNA binding proteins, it binds directly near the 3'-end of the 23S rRNA, where it nucleates assembly of the 50S subunit. The protein is Large ribosomal subunit protein uL3 of Caldanaerobacter subterraneus subsp. tengcongensis (strain DSM 15242 / JCM 11007 / NBRC 100824 / MB4) (Thermoanaerobacter tengcongensis).